A 220-amino-acid chain; its full sequence is Ribosomal RNA small subunit methyltransferase G (220 aa).

The S-adenosyl-L-methionine site is built by glycine 78, leucine 83, and arginine 144.

This sequence belongs to the methyltransferase superfamily. RNA methyltransferase RsmG family.

The protein resides in the cytoplasm. The catalysed reaction is guanosine(527) in 16S rRNA + S-adenosyl-L-methionine = N(7)-methylguanosine(527) in 16S rRNA + S-adenosyl-L-homocysteine. Functionally, specifically methylates the N7 position of guanine in position 527 of 16S rRNA. The sequence is that of Ribosomal RNA small subunit methyltransferase G from Alkalilimnicola ehrlichii (strain ATCC BAA-1101 / DSM 17681 / MLHE-1).